Reading from the N-terminus, the 393-residue chain is 26S proteasome regulatory subunit 10B (393 aa).

178–185 (GPPGTGKT) contributes to the ATP binding site.

It belongs to the AAA ATPase family.

The protein localises to the cytoplasm. The protein resides in the nucleus. Functionally, the 26S proteasome is involved in the ATP-dependent degradation of ubiquitinated proteins. The regulatory (or ATPase) complex confers ATP dependency and substrate specificity to the 26S complex. This Dictyostelium discoideum (Social amoeba) protein is 26S proteasome regulatory subunit 10B (psmC6).